A 669-amino-acid polypeptide reads, in one-letter code: UvrABC system protein C (669 aa).

Residues 14–91 (DSPGCYLHKD…IQRYKPKYNI (78 aa)) enclose the GIY-YIG domain. In terms of domain architecture, UVR spans 196 to 231 (KKIVKELEGKMISASDNMEFEQAAEYRDVIKAIGTL). The interval 647–669 (PHKSDENWESIKDNVPLLKSEKS) is disordered. Over residues 648 to 658 (HKSDENWESIK) the composition is skewed to basic and acidic residues.

Belongs to the UvrC family. Interacts with UvrB in an incision complex.

The protein resides in the cytoplasm. Its function is as follows. The UvrABC repair system catalyzes the recognition and processing of DNA lesions. UvrC both incises the 5' and 3' sides of the lesion. The N-terminal half is responsible for the 3' incision and the C-terminal half is responsible for the 5' incision. This is UvrABC system protein C from Lactococcus lactis subsp. cremoris (strain MG1363).